A 338-amino-acid chain; its full sequence is Anthranilate phosphoribosyltransferase (338 aa).

Residues Gly80, 83–84 (GD), Thr88, 90–93 (NIST), 108–116 (KHGNRAMSS), and Ser120 contribute to the 5-phospho-alpha-D-ribose 1-diphosphate site. Gly80 serves as a coordination point for anthranilate. Ser92 is a Mg(2+) binding site. Residue Asn111 coordinates anthranilate. Arg166 provides a ligand contact to anthranilate. The Mg(2+) site is built by Asp225 and Glu226.

It belongs to the anthranilate phosphoribosyltransferase family. Homodimer. It depends on Mg(2+) as a cofactor.

The enzyme catalyses N-(5-phospho-beta-D-ribosyl)anthranilate + diphosphate = 5-phospho-alpha-D-ribose 1-diphosphate + anthranilate. The protein operates within amino-acid biosynthesis; L-tryptophan biosynthesis; L-tryptophan from chorismate: step 2/5. Functionally, catalyzes the transfer of the phosphoribosyl group of 5-phosphorylribose-1-pyrophosphate (PRPP) to anthranilate to yield N-(5'-phosphoribosyl)-anthranilate (PRA). In Herpetosiphon aurantiacus (strain ATCC 23779 / DSM 785 / 114-95), this protein is Anthranilate phosphoribosyltransferase.